A 153-amino-acid polypeptide reads, in one-letter code: Ribosome maturation factor RimP (153 aa).

The protein belongs to the RimP family.

The protein resides in the cytoplasm. Its function is as follows. Required for maturation of 30S ribosomal subunits. The polypeptide is Ribosome maturation factor RimP (Clostridium botulinum (strain Langeland / NCTC 10281 / Type F)).